A 505-amino-acid polypeptide reads, in one-letter code: Histidine ammonia-lyase (505 aa).

The segment at residues 141–143 (ASG) is a cross-link (5-imidazolinone (Ala-Gly)). Ser142 is modified (2,3-didehydroalanine (Ser)).

Belongs to the PAL/histidase family. Contains an active site 4-methylidene-imidazol-5-one (MIO), which is formed autocatalytically by cyclization and dehydration of residues Ala-Ser-Gly.

It is found in the cytoplasm. The enzyme catalyses L-histidine = trans-urocanate + NH4(+). Its pathway is amino-acid degradation; L-histidine degradation into L-glutamate; N-formimidoyl-L-glutamate from L-histidine: step 1/3. This Bacillus cereus (strain ZK / E33L) protein is Histidine ammonia-lyase.